The sequence spans 407 residues: 1-deoxy-D-xylulose 5-phosphate reductoisomerase (407 aa).

NADPH-binding residues include Thr25, Gly26, Ser27, Ile28, Asn53, and Asn136. Position 137 (Lys137) interacts with 1-deoxy-D-xylulose 5-phosphate. Glu138 contributes to the NADPH binding site. Asp162 is a Mn(2+) binding site. The 1-deoxy-D-xylulose 5-phosphate site is built by Ser163, Glu164, Ser188, and His211. A Mn(2+)-binding site is contributed by Glu164. Gly217 serves as a coordination point for NADPH. Ser224, Asn229, Lys230, and Glu233 together coordinate 1-deoxy-D-xylulose 5-phosphate. Glu233 is a binding site for Mn(2+).

This sequence belongs to the DXR family. It depends on Mg(2+) as a cofactor. The cofactor is Mn(2+).

The catalysed reaction is 2-C-methyl-D-erythritol 4-phosphate + NADP(+) = 1-deoxy-D-xylulose 5-phosphate + NADPH + H(+). It participates in isoprenoid biosynthesis; isopentenyl diphosphate biosynthesis via DXP pathway; isopentenyl diphosphate from 1-deoxy-D-xylulose 5-phosphate: step 1/6. Functionally, catalyzes the NADPH-dependent rearrangement and reduction of 1-deoxy-D-xylulose-5-phosphate (DXP) to 2-C-methyl-D-erythritol 4-phosphate (MEP). In Bradyrhizobium sp. (strain ORS 278), this protein is 1-deoxy-D-xylulose 5-phosphate reductoisomerase.